The chain runs to 466 residues: Ribulose bisphosphate carboxylase large chain (466 aa).

Lys4 carries the N6,N6,N6-trimethyllysine modification. 2 residues coordinate substrate: Asn113 and Thr163. The active-site Proton acceptor is Lys165. Lys167 is a substrate binding site. Positions 191, 193, and 194 each coordinate Mg(2+). At Lys191 the chain carries N6-carboxylysine. His284 functions as the Proton acceptor in the catalytic mechanism. Arg285, His317, and Ser369 together coordinate substrate.

It belongs to the RuBisCO large chain family. Type I subfamily. As to quaternary structure, heterohexadecamer of 8 large chains and 8 small chains; disulfide-linked. The disulfide link is formed within the large subunit homodimers. Mg(2+) is required as a cofactor. Post-translationally, the disulfide bond which can form in the large chain dimeric partners within the hexadecamer appears to be associated with oxidative stress and protein turnover.

Its subcellular location is the plastid. It localises to the chloroplast. The catalysed reaction is 2 (2R)-3-phosphoglycerate + 2 H(+) = D-ribulose 1,5-bisphosphate + CO2 + H2O. It catalyses the reaction D-ribulose 1,5-bisphosphate + O2 = 2-phosphoglycolate + (2R)-3-phosphoglycerate + 2 H(+). Functionally, ruBisCO catalyzes two reactions: the carboxylation of D-ribulose 1,5-bisphosphate, the primary event in carbon dioxide fixation, as well as the oxidative fragmentation of the pentose substrate in the photorespiration process. Both reactions occur simultaneously and in competition at the same active site. This is Ribulose bisphosphate carboxylase large chain from Proboscidea louisianica (Louisiana Devil's-claw).